Consider the following 28-residue polypeptide: Aryl acylamidase (28 aa).

In terms of assembly, homodimer.

The catalysed reaction is an anilide + H2O = aniline + a carboxylate + H(+). This is Aryl acylamidase from Nocardia globerula.